The following is a 236-amino-acid chain: Probable methylthioribulose-1-phosphate dehydratase (236 aa).

Residues 1–29 are disordered; that stretch reads MQNVQQPKKRKLSDEIIAEDEDYQRDPEH. A substrate-binding site is contributed by Cys-103. Zn(2+)-binding residues include His-121, His-123, and His-201.

It belongs to the aldolase class II family. MtnB subfamily. The cofactor is Zn(2+).

The protein localises to the cytoplasm. The catalysed reaction is 5-(methylsulfanyl)-D-ribulose 1-phosphate = 5-methylsulfanyl-2,3-dioxopentyl phosphate + H2O. The protein operates within amino-acid biosynthesis; L-methionine biosynthesis via salvage pathway; L-methionine from S-methyl-5-thio-alpha-D-ribose 1-phosphate: step 2/6. Catalyzes the dehydration of methylthioribulose-1-phosphate (MTRu-1-P) into 2,3-diketo-5-methylthiopentyl-1-phosphate (DK-MTP-1-P). This Trichoplax adhaerens (Trichoplax reptans) protein is Probable methylthioribulose-1-phosphate dehydratase.